The chain runs to 495 residues: Probable histidine ammonia-lyase (495 aa).

The 5-imidazolinone (Ala-Gly) cross-link spans 141–143 (ASG). Residue serine 142 is modified to 2,3-didehydroalanine (Ser).

The protein belongs to the PAL/histidase family. Contains an active site 4-methylidene-imidazol-5-one (MIO), which is formed autocatalytically by cyclization and dehydration of residues Ala-Ser-Gly.

It localises to the cytoplasm. The catalysed reaction is L-histidine = trans-urocanate + NH4(+). It participates in amino-acid degradation; L-histidine degradation into L-glutamate; N-formimidoyl-L-glutamate from L-histidine: step 1/3. The protein is Probable histidine ammonia-lyase of Thermoplasma volcanium (strain ATCC 51530 / DSM 4299 / JCM 9571 / NBRC 15438 / GSS1).